The chain runs to 761 residues: Cyclin-F (761 aa).

Residues 19–27 (RRRIKRRPR) carry the Nuclear localization signal 1 motif. The F-box domain occupies 28 to 75 (VLTLLSLPEDVLLYVLECLPAVDILSMREVHPHLRSLVDSHSSVWARA). Residues 300 to 411 (NKSSIFTTQK…EIISALEGKI (112 aa)) form the Cyclin N-terminal domain. Short sequence motifs (d box) lie at residues 316–319 (RYIL) and 355–358 (RAKL). 2 disordered regions span residues 575–594 (NKTK…SFVT) and 677–761 (AENG…SDEL). The span at 580–590 (RREESIQEDRG) shows a compositional bias: basic and acidic residues. Positions 589–745 (RGSFVTTPTA…LLKASRRQVK (157 aa)) are PEST. Over residues 691–718 (SSGYSSVSSGGSPTSSSSPGLPFTPTPG) the composition is skewed to low complexity. Positions 739-749 (ASRRQVKRKNQ) are enriched in basic residues.

Belongs to the cyclin family. Cyclin AB subfamily. As to quaternary structure, component of the SCF(CCNF) complex.

The protein resides in the nucleus. The protein localises to the cytoplasm. It localises to the perinuclear region. It is found in the cytoskeleton. Its subcellular location is the microtubule organizing center. The protein resides in the centrosome. The protein localises to the centriole. In terms of biological role, substrate recognition component of the SCF(CCNF) E3 ubiquitin-protein ligase complex which mediates the ubiquitination and subsequent proteasomal degradation of target proteins. The SCF(CCNF) E3 ubiquitin-protein ligase complex is an integral component of the ubiquitin proteasome system (UPS) and links proteasome degradation to the cell cycle. Mediates the substrate recognition and the proteasomal degradation of various target proteins during G2 phase involved in the regulation of cell cycle progression and in the maintenance of genome stability. The chain is Cyclin-F (ccnf) from Xenopus laevis (African clawed frog).